The sequence spans 131 residues: Small ribosomal subunit protein uS11 (131 aa).

The protein belongs to the universal ribosomal protein uS11 family. Part of the 30S ribosomal subunit. Interacts with proteins S7 and S18. Binds to IF-3.

Functionally, located on the platform of the 30S subunit, it bridges several disparate RNA helices of the 16S rRNA. Forms part of the Shine-Dalgarno cleft in the 70S ribosome. This is Small ribosomal subunit protein uS11 from Deinococcus radiodurans (strain ATCC 13939 / DSM 20539 / JCM 16871 / CCUG 27074 / LMG 4051 / NBRC 15346 / NCIMB 9279 / VKM B-1422 / R1).